The following is a 154-amino-acid chain: Superoxide dismutase [Cu-Zn] (154 aa).

The Cu cation site is built by histidine 47, histidine 49, and histidine 64. A disulfide bond links cysteine 58 and cysteine 147. Zn(2+) is bound by residues histidine 64, histidine 72, histidine 81, and aspartate 84. Position 121 (histidine 121) interacts with Cu cation. Residues threonine 124–lysine 137 show a composition bias toward basic and acidic residues. The tract at residues threonine 124–arginine 144 is disordered. Arginine 144 provides a ligand contact to substrate.

This sequence belongs to the Cu-Zn superoxide dismutase family. Homodimer. Cu cation is required as a cofactor. Zn(2+) serves as cofactor.

It localises to the cytoplasm. The catalysed reaction is 2 superoxide + 2 H(+) = H2O2 + O2. Functionally, destroys radicals which are normally produced within the cells and which are toxic to biological systems. The polypeptide is Superoxide dismutase [Cu-Zn] (sodA) (Emericella nidulans (strain FGSC A4 / ATCC 38163 / CBS 112.46 / NRRL 194 / M139) (Aspergillus nidulans)).